We begin with the raw amino-acid sequence, 122 residues long: MASVYENSYMIVLIFLLLGILLPVVALTLGKMLRPNKPSAAKATTYESGIEPFHDANIRFHARYYIFALLFVIFDVETLFLYPWAVAYDKLGLFALIEMLIFVVMLLVGLAYAWKKKVLQWL.

The next 3 helical transmembrane spans lie at 10–30 (MIVLIFLLLGILLPVVALTLG), 66–86 (IFALLFVIFDVETLFLYPWAV), and 91–111 (LGLFALIEMLIFVVMLLVGLA).

It belongs to the complex I subunit 3 family. As to quaternary structure, NDH-1 is composed of 14 different subunits. Subunits NuoA, H, J, K, L, M, N constitute the membrane sector of the complex.

Its subcellular location is the cell membrane. It carries out the reaction a quinone + NADH + 5 H(+)(in) = a quinol + NAD(+) + 4 H(+)(out). NDH-1 shuttles electrons from NADH, via FMN and iron-sulfur (Fe-S) centers, to quinones in the respiratory chain. The immediate electron acceptor for the enzyme in this species is believed to be a menaquinone. Couples the redox reaction to proton translocation (for every two electrons transferred, four hydrogen ions are translocated across the cytoplasmic membrane), and thus conserves the redox energy in a proton gradient. This is NADH-quinone oxidoreductase subunit A from Bacillus mycoides (strain KBAB4) (Bacillus weihenstephanensis).